The sequence spans 121 residues: Small ribosomal subunit protein uS13 (121 aa).

Residues 88 to 121 form a disordered region; that stretch reads GMRHRRGLPTRGQNTKNNARTRKGPAKSIAGKKK. Residues 106–121 are compositionally biased toward basic residues; it reads ARTRKGPAKSIAGKKK.

The protein belongs to the universal ribosomal protein uS13 family. As to quaternary structure, part of the 30S ribosomal subunit. Forms a loose heterodimer with protein S19. Forms two bridges to the 50S subunit in the 70S ribosome.

In terms of biological role, located at the top of the head of the 30S subunit, it contacts several helices of the 16S rRNA. In the 70S ribosome it contacts the 23S rRNA (bridge B1a) and protein L5 of the 50S subunit (bridge B1b), connecting the 2 subunits; these bridges are implicated in subunit movement. Contacts the tRNAs in the A and P-sites. The protein is Small ribosomal subunit protein uS13 of Lactococcus lactis subsp. cremoris (strain MG1363).